Consider the following 358-residue polypeptide: Phospho-N-acetylmuramoyl-pentapeptide-transferase (358 aa).

A run of 10 helical transmembrane segments spans residues 27–47 (IYAM…VIRV), 73–93 (TMGG…WADL), 97–117 (YIWT…VDDY), 134–154 (MFWQ…KPGF), 170–190 (LWFW…NAVN), 197–217 (GLAI…SYVA), 233–253 (GAGE…GFLW), 261–281 (VFMG…IAVI), 286–306 (ILLV…IFQV), and 335–355 (KIIV…ISTL).

Belongs to the glycosyltransferase 4 family. MraY subfamily. The cofactor is Mg(2+).

The protein localises to the cell inner membrane. The catalysed reaction is UDP-N-acetyl-alpha-D-muramoyl-L-alanyl-gamma-D-glutamyl-meso-2,6-diaminopimeloyl-D-alanyl-D-alanine + di-trans,octa-cis-undecaprenyl phosphate = di-trans,octa-cis-undecaprenyl diphospho-N-acetyl-alpha-D-muramoyl-L-alanyl-D-glutamyl-meso-2,6-diaminopimeloyl-D-alanyl-D-alanine + UMP. The protein operates within cell wall biogenesis; peptidoglycan biosynthesis. In terms of biological role, catalyzes the initial step of the lipid cycle reactions in the biosynthesis of the cell wall peptidoglycan: transfers peptidoglycan precursor phospho-MurNAc-pentapeptide from UDP-MurNAc-pentapeptide onto the lipid carrier undecaprenyl phosphate, yielding undecaprenyl-pyrophosphoryl-MurNAc-pentapeptide, known as lipid I. The sequence is that of Phospho-N-acetylmuramoyl-pentapeptide-transferase from Pelobacter propionicus (strain DSM 2379 / NBRC 103807 / OttBd1).